Here is a 613-residue protein sequence, read N- to C-terminus: Transcription factor cbf11 (613 aa).

The tract at residues 32–58 is disordered; the sequence is NNGLHNQEDGAGGRNENSERVGSGSPG.

The protein belongs to the Su(H) family.

The protein resides in the cytoplasm. Its subcellular location is the nucleus. In terms of biological role, transcription factor that behaves as a negative regulator of adhesion. Recognizes specifically the canonical CSL response element GTGA/GGAA. May also play a cbf12-antagonistic role in the regulation of a number of other important processes such as extracellular material production, colony morphogenesis, ploidy maintenance, or meiosis. In Schizosaccharomyces pombe (strain 972 / ATCC 24843) (Fission yeast), this protein is Transcription factor cbf11 (cbf11).